Here is a 957-residue protein sequence, read N- to C-terminus: Glycine dehydrogenase (decarboxylating) (957 aa).

Lys708 is modified (N6-(pyridoxal phosphate)lysine).

This sequence belongs to the GcvP family. In terms of assembly, the glycine cleavage system is composed of four proteins: P, T, L and H. Pyridoxal 5'-phosphate serves as cofactor.

It carries out the reaction N(6)-[(R)-lipoyl]-L-lysyl-[glycine-cleavage complex H protein] + glycine + H(+) = N(6)-[(R)-S(8)-aminomethyldihydrolipoyl]-L-lysyl-[glycine-cleavage complex H protein] + CO2. The glycine cleavage system catalyzes the degradation of glycine. The P protein binds the alpha-amino group of glycine through its pyridoxal phosphate cofactor; CO(2) is released and the remaining methylamine moiety is then transferred to the lipoamide cofactor of the H protein. In Escherichia coli O7:K1 (strain IAI39 / ExPEC), this protein is Glycine dehydrogenase (decarboxylating).